Here is a 450-residue protein sequence, read N- to C-terminus: Glutamyl-tRNA reductase (450 aa).

Residues 45 to 48 (TCNR), Ser-107, 112 to 114 (ERE), and Gln-118 each bind substrate. Cys-46 (nucleophile) is an active-site residue. 196 to 201 (GTGAYA) is an NADP(+) binding site.

Belongs to the glutamyl-tRNA reductase family. In terms of assembly, homodimer.

The enzyme catalyses (S)-4-amino-5-oxopentanoate + tRNA(Glu) + NADP(+) = L-glutamyl-tRNA(Glu) + NADPH + H(+). Its pathway is porphyrin-containing compound metabolism; protoporphyrin-IX biosynthesis; 5-aminolevulinate from L-glutamyl-tRNA(Glu): step 1/2. Its function is as follows. Catalyzes the NADPH-dependent reduction of glutamyl-tRNA(Glu) to glutamate 1-semialdehyde (GSA). The chain is Glutamyl-tRNA reductase from Micrococcus luteus (strain ATCC 4698 / DSM 20030 / JCM 1464 / CCM 169 / CCUG 5858 / IAM 1056 / NBRC 3333 / NCIMB 9278 / NCTC 2665 / VKM Ac-2230) (Micrococcus lysodeikticus).